Here is a 274-residue protein sequence, read N- to C-terminus: Aspartate/glutamate leucyltransferase (274 aa).

The protein belongs to the R-transferase family. Bpt subfamily.

The protein resides in the cytoplasm. It carries out the reaction N-terminal L-glutamyl-[protein] + L-leucyl-tRNA(Leu) = N-terminal L-leucyl-L-glutamyl-[protein] + tRNA(Leu) + H(+). The enzyme catalyses N-terminal L-aspartyl-[protein] + L-leucyl-tRNA(Leu) = N-terminal L-leucyl-L-aspartyl-[protein] + tRNA(Leu) + H(+). Functions in the N-end rule pathway of protein degradation where it conjugates Leu from its aminoacyl-tRNA to the N-termini of proteins containing an N-terminal aspartate or glutamate. The polypeptide is Aspartate/glutamate leucyltransferase (Ruegeria sp. (strain TM1040) (Silicibacter sp.)).